A 139-amino-acid polypeptide reads, in one-letter code: Gastrula zinc finger protein XlCGF29.1 (139 aa).

5 C2H2-type zinc fingers span residues 6–28 (FTCT…LLIH), 34–56 (FDST…LSTH), 62–84 (FVCT…LHSH), 90–112 (FPCS…LRHH), and 117–139 (FPCT…QMIH).

Belongs to the krueppel C2H2-type zinc-finger protein family.

The protein resides in the nucleus. Functionally, may be involved in transcriptional regulation. The polypeptide is Gastrula zinc finger protein XlCGF29.1 (Xenopus laevis (African clawed frog)).